A 259-amino-acid polypeptide reads, in one-letter code: NAD kinase (259 aa).

Catalysis depends on Asp49, which acts as the Proton acceptor. Residues 49–50 (DG), Arg54, 118–119 (NE), Asp148, Ala156, 159–164 (TAYNYS), and Ala183 contribute to the NAD(+) site.

This sequence belongs to the NAD kinase family. Requires a divalent metal cation as cofactor.

The protein localises to the cytoplasm. The catalysed reaction is NAD(+) + ATP = ADP + NADP(+) + H(+). In terms of biological role, involved in the regulation of the intracellular balance of NAD and NADP, and is a key enzyme in the biosynthesis of NADP. Catalyzes specifically the phosphorylation on 2'-hydroxyl of the adenosine moiety of NAD to yield NADP. The sequence is that of NAD kinase from Xylella fastidiosa (strain 9a5c).